Here is a 179-residue protein sequence, read N- to C-terminus: MSRIGKREIELPAGVSVELASDAVVVKGPKGQLSTPTHPKIAYAVADGKVQVSRTDDTRVARAQHGLRRTLLANLVEGVSKGFTKTLEVIGVGYKVATAGNTVSLAVGFSHPVDFKLPEGIEAKVEGNKLTLSGIDKVLLGETAARIRRVRPPEPFKGKGIKYENEVIRRKAGKSGGKK.

It belongs to the universal ribosomal protein uL6 family. As to quaternary structure, part of the 50S ribosomal subunit.

In terms of biological role, this protein binds to the 23S rRNA, and is important in its secondary structure. It is located near the subunit interface in the base of the L7/L12 stalk, and near the tRNA binding site of the peptidyltransferase center. This Solidesulfovibrio magneticus (strain ATCC 700980 / DSM 13731 / RS-1) (Desulfovibrio magneticus) protein is Large ribosomal subunit protein uL6.